Here is an 81-residue protein sequence, read N- to C-terminus: Conotoxin Eb11.3 (81 aa).

Positions 1 to 23 (MMFRLTSVWCLLVIVLLNSAVDG) are cleaved as a signal peptide. Cystine bridges form between C27-C41, C34-C48, C40-C56, and C47-C62. At L69 the chain carries Leucine amide. A propeptide spanning residues 73–81 (AQYKRFFRR) is cleaved from the precursor.

This sequence belongs to the conotoxin I2 superfamily. Expressed by the venom duct.

It is found in the secreted. In Conus eburneus (Ivory cone), this protein is Conotoxin Eb11.3.